Here is a 138-residue protein sequence, read N- to C-terminus: Ferredoxin-2 (138 aa).

The 2Fe-2S ferredoxin-type domain occupies 27–117 (ADANLQSTDF…DAKIVYNLKH (91 aa)). Positions 62, 67, 70, and 100 each coordinate [2Fe-2S] cluster.

This sequence belongs to the 2Fe2S plant-type ferredoxin family. Requires [2Fe-2S] cluster as cofactor.

Ferredoxins are iron-sulfur proteins that transfer electrons in a wide variety of metabolic reactions. This is Ferredoxin-2 (fer2) from Haloarcula marismortui (strain ATCC 43049 / DSM 3752 / JCM 8966 / VKM B-1809) (Halobacterium marismortui).